A 151-amino-acid polypeptide reads, in one-letter code: Inorganic triphosphatase (151 aa).

Residues 1 to 148 (MTEIERKFLV…KRYKNKALAL (148 aa)) enclose the CYTH domain. Tyr-27 (proton acceptor) is an active-site residue.

As to quaternary structure, homodimer.

It carries out the reaction triphosphate + H2O = phosphate + diphosphate. Activated by magnesium and mangenese ions, and inhibited by calcium, zinc and copper ions. Its function is as follows. Involved in the hydrolysis of the beta-gamma-phosphoanhydride linkage of triphosphate-containing substrates (inorganic or nucleoside-linked). Catalyzes the hydrolysis of inorganic triphosphate (PPPi). The enzyme has a strong preference for linear PPPi compared with cyclic PPPi (cyclic trimetaphosphate) and to the linear P4. The longer chains polyphosphate are not hydrolyzed. It has only a slight thiamine triphosphatase (ThTPase) activity. Nucleoside triphosphatase activity is negligible in the presence of magnesium, but a small activity is observed in the presence of manganese, in particular with GTP. The chain is Inorganic triphosphatase from Nitrosomonas europaea (strain ATCC 19718 / CIP 103999 / KCTC 2705 / NBRC 14298).